A 329-amino-acid polypeptide reads, in one-letter code: Phosphate acyltransferase (329 aa).

This sequence belongs to the PlsX family. Homodimer. Probably interacts with PlsY.

Its subcellular location is the cytoplasm. It carries out the reaction a fatty acyl-[ACP] + phosphate = an acyl phosphate + holo-[ACP]. The protein operates within lipid metabolism; phospholipid metabolism. Its function is as follows. Catalyzes the reversible formation of acyl-phosphate (acyl-PO(4)) from acyl-[acyl-carrier-protein] (acyl-ACP). This enzyme utilizes acyl-ACP as fatty acyl donor, but not acyl-CoA. This is Phosphate acyltransferase from Campylobacter fetus subsp. fetus (strain 82-40).